A 53-amino-acid chain; its full sequence is 20 kDa chaperonin (53 aa).

Cpn-10 domain stretches follow at residues 1–10 (YTSIKPLGDR) and 11–53 (VAEA…KITP).

This sequence belongs to the GroES chaperonin family. Forms stable complexes with cpn60 in the presence of ATP. Homotetramer.

The protein resides in the plastid. It localises to the chloroplast. Its function is as follows. Seems to function only as a co-chaperone, along with cpn60, and in certain cases is essential for the discharge of biologically active proteins from cpn60. The chain is 20 kDa chaperonin from Populus euphratica (Euphrates poplar).